The primary structure comprises 367 residues: MDYTNAIHIIPDAAGPDAWANAAAQGGDAGIWATEDDYNSQWNADGGGGGSSRAGSEQPPPGKKSRGGGGGEGGGNTSKSRAIGKMFFKTKLCCKFRAGTCPYVTNCNFAHGMEELRKPPPNWQEIVAAHEEATEAREEHQIPIMTSSGPTAGGDAGCGGGGGGGSGRAYKGRHCKKFYTDEGCPYGDACTFLHDEQSKARESVAISLSPSVGGGGGGGSYNSAAAAAASASAAAGNGPMQKPSNWKTRICNKWEMTGYCPFGSKCHFAHGAAELHKYGGGLVDIDSRDAAATPDSKQAVVSAKAPAETAAASTTVLPHADVYHLGVQAQRSTIAGQRSGQVQRPIQKWKGPDKISRIYGDWIDETE.

The interval 38–80 (YNSQWNADGGGGGSSRAGSEQPPPGKKSRGGGGGEGGGNTSKS) is disordered. Residues 67-76 (GGGGGEGGGN) are compositionally biased toward gly residues. 3 consecutive C3H1-type zinc fingers follow at residues 87–114 (FFKTKLCCKFRAGTCPYVTNCNFAHGME), 169–197 (AYKGRHCKKFYTDEGCPYGDACTFLHDEQ), and 245–273 (NWKTRICNKWEMTGYCPFGSKCHFAHGAA).

This Oryza sativa subsp. japonica (Rice) protein is Zinc finger CCCH domain-containing protein 56.